The primary structure comprises 440 residues: Beta-1,3-galactosyl-O-glycosyl-glycoprotein beta-1,6-N-acetylglucosaminyltransferase (440 aa).

At Met1 to Lys9 the chain is on the cytoplasmic side. A helical; Signal-anchor for type II membrane protein membrane pass occupies residues Leu10 to Leu30. Over Arg31–Leu440 the chain is Lumenal. Residues Asn72 and Asn108 are each glycosylated (N-linked (GlcNAc...) asparagine; by host). 4 disulfide bridges follow: Cys73–Cys230, Cys164–Cys384, Cys185–Cys212, and Cys393–Cys425.

This sequence belongs to the glycosyltransferase 14 family.

Its subcellular location is the host Golgi apparatus membrane. It carries out the reaction a 3-O-[beta-D-galactosyl-(1-&gt;3)-N-acetyl-alpha-D-galactosaminyl]-L-seryl-[protein] + UDP-N-acetyl-alpha-D-glucosamine = 3-O-{beta-D-galactosyl-(1-&gt;3)-[N-acetyl-beta-D-glucosaminyl-(1-&gt;6)]-N-acetyl-alpha-D-galactosaminyl}-L-seryl-[protein] + UDP + H(+). The enzyme catalyses a 3-O-[beta-D-galactosyl-(1-&gt;3)-N-acetyl-alpha-D-galactosaminyl]-L-threonyl-[protein] + UDP-N-acetyl-alpha-D-glucosamine = a 3-O-{beta-D-galactosyl-(1-&gt;3)-[N-acetyl-beta-D-glucosaminyl-(1-&gt;6)]-N-acetyl-alpha-D-galactosaminyl}-L-threonyl-[protein] + UDP + H(+). It catalyses the reaction a beta-D-Gal-(1-&gt;4)-beta-D-GlcNAc-(1-&gt;3)-beta-D-Gal-(1-&gt;4)-beta-D-GlcNAc derivative + UDP-N-acetyl-alpha-D-glucosamine = a beta-D-Gal-(1-&gt;4)-beta-D-GlcNAc-(1-&gt;3)-[beta-D-GlcNAc-(1-&gt;6)]-beta-D-Gal-(1-&gt;4)-N-acetyl-beta-D-glucosaminyl derivative + UDP + H(+). The catalysed reaction is 3-O-[N-acetyl-beta-D-glucosaminyl-(1-&gt;3)-N-acetyl-alpha-D-galactosaminyl]-L-seryl-[protein] + UDP-N-acetyl-alpha-D-glucosamine = 3-O-[N-acetyl-beta-D-glucosaminyl-(1-&gt;3)-[N-acetyl-beta-D-glucosaminyl-(1-&gt;6)]-N-acetyl-alpha-D-galactosaminyl]-L-seryl-[protein] + UDP + H(+). It carries out the reaction a 3-O-[N-acetyl-beta-D-glucosaminyl-(1-&gt;3)-N-acetyl-alpha-D-galactosaminyl]-L-threonyl-[protein] + UDP-N-acetyl-alpha-D-glucosamine = 3-O-[N-acetyl-beta-D-glucosaminyl-(1-&gt;3)-[N-acetyl-beta-D-glucosaminyl-(1-&gt;6)]-N-acetyl-alpha-D-galactosaminyl]-L-threonyl-[protein] + UDP + H(+). The protein operates within protein modification; protein glycosylation. Its function is as follows. Non-essential glycosyltransferase that can synthesize all known mucin beta 6 N-acetylglucosaminides. Mediates core 2 and core 4 O-glycan branching, 2 important steps in mucin-type biosynthesis. Has also I-branching enzyme activity by converting linear into branched poly-N-acetyllactosaminoglycans. Contributes to the post-translational modifications of structural proteins. This is Beta-1,3-galactosyl-O-glycosyl-glycoprotein beta-1,6-N-acetylglucosaminyltransferase (Bo17) from Bovine herpesvirus 4 (strain LVR140) (BoHV-4).